The chain runs to 433 residues: tRNA-2-methylthio-N(6)-dimethylallyladenosine synthase (433 aa).

One can recognise an MTTase N-terminal domain in the interval Lys3–Ala118. [4Fe-4S] cluster-binding residues include Cys12, Cys49, Cys81, Cys150, Cys154, and Cys157. The Radical SAM core domain occupies Ser136 to Glu369. Positions Gln372–Leu433 constitute a TRAM domain.

Belongs to the methylthiotransferase family. MiaB subfamily. Monomer. The cofactor is [4Fe-4S] cluster.

It localises to the cytoplasm. The catalysed reaction is N(6)-dimethylallyladenosine(37) in tRNA + (sulfur carrier)-SH + AH2 + 2 S-adenosyl-L-methionine = 2-methylsulfanyl-N(6)-dimethylallyladenosine(37) in tRNA + (sulfur carrier)-H + 5'-deoxyadenosine + L-methionine + A + S-adenosyl-L-homocysteine + 2 H(+). In terms of biological role, catalyzes the methylthiolation of N6-(dimethylallyl)adenosine (i(6)A), leading to the formation of 2-methylthio-N6-(dimethylallyl)adenosine (ms(2)i(6)A) at position 37 in tRNAs that read codons beginning with uridine. The sequence is that of tRNA-2-methylthio-N(6)-dimethylallyladenosine synthase from Wolinella succinogenes (strain ATCC 29543 / DSM 1740 / CCUG 13145 / JCM 31913 / LMG 7466 / NCTC 11488 / FDC 602W) (Vibrio succinogenes).